We begin with the raw amino-acid sequence, 542 residues long: Probable E3 ubiquitin-protein ligase ARI11 (542 aa).

The tract at residues 1-25 (MSSSDRDIIDIESGEEDLYSDGGND) is disordered. Positions 10 to 19 (DIESGEEDLY) are enriched in acidic residues. A TRIAD supradomain region spans residues 135–342 (VDIQCGICFE…SDHKACNAFK (208 aa)). Residues Cys-139, Cys-142, Cys-156, His-158, Cys-161, Cys-164, Cys-184, Cys-189, Cys-228, Cys-233, Cys-251, Cys-253, Cys-258, Cys-261, His-266, Cys-271, Cys-298, and Cys-301 each contribute to the Zn(2+) site. The RING-type 1 zinc-finger motif lies at 139-189 (CGICFESYTRKEIARVSCGHPYCKTCWTGYITTKIEDGPGCLRVKCPEPSC). The IBR-type zinc finger occupies 208–271 (DKYYRYFLRS…CEDAHSPVDC (64 aa)). The segment at 298 to 328 (CPKCKRPIEKNTGCNHMSCSAPCRHYFCWAC) adopts an RING-type 2; atypical zinc-finger fold. Cys-311 is an active-site residue. The Zn(2+) site is built by Cys-316, Cys-320, Cys-325, Cys-328, His-335, and Cys-338.

It belongs to the RBR family. Ariadne subfamily. It depends on Zn(2+) as a cofactor.

The enzyme catalyses [E2 ubiquitin-conjugating enzyme]-S-ubiquitinyl-L-cysteine + [acceptor protein]-L-lysine = [E2 ubiquitin-conjugating enzyme]-L-cysteine + [acceptor protein]-N(6)-ubiquitinyl-L-lysine.. Its pathway is protein modification; protein ubiquitination. Functionally, might act as an E3 ubiquitin-protein ligase, or as part of E3 complex, which accepts ubiquitin from specific E2 ubiquitin-conjugating enzymes and then transfers it to substrates. This Arabidopsis thaliana (Mouse-ear cress) protein is Probable E3 ubiquitin-protein ligase ARI11 (ARI11).